The following is an 87-amino-acid chain: Small ribosomal subunit protein uS17 (87 aa).

It belongs to the universal ribosomal protein uS17 family. In terms of assembly, part of the 30S ribosomal subunit.

Its function is as follows. One of the primary rRNA binding proteins, it binds specifically to the 5'-end of 16S ribosomal RNA. The sequence is that of Small ribosomal subunit protein uS17 from Geobacillus stearothermophilus (Bacillus stearothermophilus).